Here is a 219-residue protein sequence, read N- to C-terminus: UPF0502 protein HCH_06091 (219 aa).

Belongs to the UPF0502 family.

The protein is UPF0502 protein HCH_06091 of Hahella chejuensis (strain KCTC 2396).